We begin with the raw amino-acid sequence, 333 residues long: DnaJ homolog subfamily C member 25 homolog (333 aa).

Residues 8 to 28 (LVLLALLPTMALGLLEGLYCG) form a helical membrane-spanning segment. In terms of domain architecture, J spans 31-99 (NCYDVLGVTR…ESRTDYDYML (69 aa)). Residues 123–143 (VRVVIVVVLTIVSVIQYYSGW) traverse the membrane as a helical segment. The stretch at 158 to 208 (KYRNQALEIARDEIQEKIQKKGKNRMSKNDQRDELERIIRRVIEEKMDVKG) forms a coiled coil. Residues 218 to 238 (VLWVQLIICPYTILSFIVWHA) traverse the membrane as a helical segment.

It belongs to the DNAJC25 family.

It localises to the membrane. In Drosophila melanogaster (Fruit fly), this protein is DnaJ homolog subfamily C member 25 homolog.